We begin with the raw amino-acid sequence, 434 residues long: Nicotinate phosphoribosyltransferase (434 aa).

The residue at position 242 (H242) is a Phosphohistidine; by autocatalysis.

It belongs to the NAPRTase family. Post-translationally, transiently phosphorylated on a His residue during the reaction cycle. Phosphorylation strongly increases the affinity for substrates and increases the rate of nicotinate D-ribonucleotide production. Dephosphorylation regenerates the low-affinity form of the enzyme, leading to product release.

The enzyme catalyses nicotinate + 5-phospho-alpha-D-ribose 1-diphosphate + ATP + H2O = nicotinate beta-D-ribonucleotide + ADP + phosphate + diphosphate. It participates in cofactor biosynthesis; NAD(+) biosynthesis; nicotinate D-ribonucleotide from nicotinate: step 1/1. Its function is as follows. Catalyzes the synthesis of beta-nicotinate D-ribonucleotide from nicotinate and 5-phospho-D-ribose 1-phosphate at the expense of ATP. This is Nicotinate phosphoribosyltransferase from Nitrobacter hamburgensis (strain DSM 10229 / NCIMB 13809 / X14).